Here is a 426-residue protein sequence, read N- to C-terminus: MSKSEQLFEKAQKVIPGGVNSPVRAFKGVGGTPVFIQKAEGAYITDSDGKKYIDYVGSWGPMVLGHNHPAIIDAVLKAVPNGLSFGAPTESEITLAELVTKLVPSIELVRMVSSGTEATMSAIRLARGYTGRDKIIKFEGCYHGHSDSLLVKAGSGALTLGQPSGPGVPADFAKHTLTCTYNDLDSVKTAFEQYPNEIACLIVEPVAGNMNCIPPKNDFLKGLRALCDQYGAVFIIDEVMTGFRVALGGAQAYYDVKPDLTTLGKIIGGGMPVGAFGGKKEIMEYIAPTGPVYQAGTLSGNPIAMAAGLACLTELSKAGNEEKLAAQTKTLAEGFKALADKHNVPFTAQYVGGMFGLFFTEQAEITNFQEVMKCDAAKFNRFFHLMLEQGVYLAPSAFEAGFMSLAHSDEDIQATLVAADKAFAQL.

Residue K265 is modified to N6-(pyridoxal phosphate)lysine.

The protein belongs to the class-III pyridoxal-phosphate-dependent aminotransferase family. HemL subfamily. Homodimer. Pyridoxal 5'-phosphate serves as cofactor.

The protein localises to the cytoplasm. The catalysed reaction is (S)-4-amino-5-oxopentanoate = 5-aminolevulinate. It participates in porphyrin-containing compound metabolism; protoporphyrin-IX biosynthesis; 5-aminolevulinate from L-glutamyl-tRNA(Glu): step 2/2. The sequence is that of Glutamate-1-semialdehyde 2,1-aminomutase from Actinobacillus pleuropneumoniae serotype 7 (strain AP76).